The chain runs to 548 residues: Chaperonin GroEL 2 (548 aa).

ATP-binding positions include 30 to 33 (TLGP), Lys-51, 87 to 91 (DGTTT), Gly-415, 479 to 481 (NAA), and Asp-495. Residues 524–548 (APKDAPPTAPAGVPGAGAGGPGFDF) are disordered. Positions 537-548 (PGAGAGGPGFDF) are enriched in gly residues.

It belongs to the chaperonin (HSP60) family. Forms a cylinder of 14 subunits composed of two heptameric rings stacked back-to-back. Interacts with the co-chaperonin GroES.

It localises to the cytoplasm. It catalyses the reaction ATP + H2O + a folded polypeptide = ADP + phosphate + an unfolded polypeptide.. Together with its co-chaperonin GroES, plays an essential role in assisting protein folding. The GroEL-GroES system forms a nano-cage that allows encapsulation of the non-native substrate proteins and provides a physical environment optimized to promote and accelerate protein folding. The protein is Chaperonin GroEL 2 of Burkholderia pseudomallei (strain 668).